We begin with the raw amino-acid sequence, 239 residues long: NAD(P)H-quinone oxidoreductase subunit K, chloroplastic (239 aa).

Residues C43, C44, C108, and C139 each coordinate [4Fe-4S] cluster. The interval 217 to 239 is disordered; the sequence is KSSVSSRELGNESGKEDVSIQNK. Residues 225–239 are compositionally biased toward basic and acidic residues; sequence LGNESGKEDVSIQNK.

This sequence belongs to the complex I 20 kDa subunit family. NDH is composed of at least 16 different subunits, 5 of which are encoded in the nucleus. The cofactor is [4Fe-4S] cluster.

The protein resides in the plastid. It is found in the chloroplast thylakoid membrane. The catalysed reaction is a plastoquinone + NADH + (n+1) H(+)(in) = a plastoquinol + NAD(+) + n H(+)(out). It catalyses the reaction a plastoquinone + NADPH + (n+1) H(+)(in) = a plastoquinol + NADP(+) + n H(+)(out). NDH shuttles electrons from NAD(P)H:plastoquinone, via FMN and iron-sulfur (Fe-S) centers, to quinones in the photosynthetic chain and possibly in a chloroplast respiratory chain. The immediate electron acceptor for the enzyme in this species is believed to be plastoquinone. Couples the redox reaction to proton translocation, and thus conserves the redox energy in a proton gradient. The protein is NAD(P)H-quinone oxidoreductase subunit K, chloroplastic of Acorus calamus var. americanus (American sweet flag).